We begin with the raw amino-acid sequence, 388 residues long: Chalcone synthase (388 aa).

Residue C164 is part of the active site.

The protein belongs to the thiolase-like superfamily. Chalcone/stilbene synthases family.

The catalysed reaction is (E)-4-coumaroyl-CoA + 3 malonyl-CoA + 3 H(+) = 2',4,4',6'-tetrahydroxychalcone + 3 CO2 + 4 CoA. It functions in the pathway secondary metabolite biosynthesis; flavonoid biosynthesis. In terms of biological role, the primary product of this enzyme is 4,2',4',6'-tetrahydroxychalcone (also termed naringenin-chalcone or chalcone) which can under specific conditions spontaneously isomerize into naringenin. The polypeptide is Chalcone synthase (CHS) (Vigna unguiculata (Cowpea)).